The following is a 599-amino-acid chain: Sulfite reductase [NADPH] flavoprotein alpha-component (599 aa).

One can recognise a Flavodoxin-like domain in the interval 64-202 (ITIISASQTG…AASEWRARVV (139 aa)). FMN contacts are provided by residues 70-75 (SQTGNA), 117-120 (STQG), and 153-162 (LGDSSYEFFC). The region spanning 234–448 (DAPLVASLSV…IEHNDNFRLP (215 aa)) is the FAD-binding FR-type domain. FAD-binding positions include Thr-322, Ala-356, 386-389 (RLYS), 404-406 (TVG), Tyr-410, and 419-422 (GGAS). NADP(+) is bound by residues 519-520 (SR), 525-529 (KVYVQ), and Asp-561. Residue Tyr-599 coordinates FAD.

It belongs to the NADPH-dependent sulphite reductase flavoprotein subunit CysJ family. In the N-terminal section; belongs to the flavodoxin family. This sequence in the C-terminal section; belongs to the flavoprotein pyridine nucleotide cytochrome reductase family. In terms of assembly, alpha(8)-beta(8). The alpha component is a flavoprotein, the beta component is a hemoprotein. It depends on FAD as a cofactor. The cofactor is FMN.

It carries out the reaction hydrogen sulfide + 3 NADP(+) + 3 H2O = sulfite + 3 NADPH + 4 H(+). Its pathway is sulfur metabolism; hydrogen sulfide biosynthesis; hydrogen sulfide from sulfite (NADPH route): step 1/1. Its function is as follows. Component of the sulfite reductase complex that catalyzes the 6-electron reduction of sulfite to sulfide. This is one of several activities required for the biosynthesis of L-cysteine from sulfate. The flavoprotein component catalyzes the electron flow from NADPH -&gt; FAD -&gt; FMN to the hemoprotein component. This Shigella flexneri serotype 5b (strain 8401) protein is Sulfite reductase [NADPH] flavoprotein alpha-component.